Consider the following 360-residue polypeptide: 3-dehydroquinate synthase (360 aa).

NAD(+) is bound by residues 105–109 (GVVGD), 129–130 (TT), lysine 142, lysine 151, and 169–172 (TLKT). Glutamate 184, histidine 247, and histidine 263 together coordinate Zn(2+).

Belongs to the sugar phosphate cyclases superfamily. Dehydroquinate synthase family. Co(2+) is required as a cofactor. Requires Zn(2+) as cofactor. NAD(+) serves as cofactor.

The protein resides in the cytoplasm. It carries out the reaction 7-phospho-2-dehydro-3-deoxy-D-arabino-heptonate = 3-dehydroquinate + phosphate. It functions in the pathway metabolic intermediate biosynthesis; chorismate biosynthesis; chorismate from D-erythrose 4-phosphate and phosphoenolpyruvate: step 2/7. Its function is as follows. Catalyzes the conversion of 3-deoxy-D-arabino-heptulosonate 7-phosphate (DAHP) to dehydroquinate (DHQ). This is 3-dehydroquinate synthase from Acetivibrio thermocellus (strain ATCC 27405 / DSM 1237 / JCM 9322 / NBRC 103400 / NCIMB 10682 / NRRL B-4536 / VPI 7372) (Clostridium thermocellum).